The primary structure comprises 1340 residues: MPNITLLKRMLVFLLLNNYFINHFNCVKCKNLNTLCIHNTNLRKTVEVKRKEATKNQIKKEVNKSDKLNVQCSPPQNIYLSDRSEDKYYLNKNKNEIHIIHFGNGLHEKYENLPIENNNYNEIIISKYNTKNKENTEKDLYTKHINKRCYLNGNPINFKILTSLYKWINSKKLHKHIKSKSAKVDKQSPPYMSIYINYGFTKPKLLFINYLSTKYKNNGKNKYLKKYLRKYEELYEKYTYELDEQNDTDVISQNNREPMPNYSIDDFLIQNKNKNYKVTLVYDYISNLHNNEYQNVESVNNFIKNNELFDINEWKKNNKPYLIYKYKYKYKNPINKQIHFYEYDYYVPKLITYEEDISTEPKFVSPNLNSTKCYNNSPINFLTTSGFSSRNIDTFGKERNKIYSFNTPTDVKRNIYFNDLIKISSSYNQHFFHNLNFLLNLYTLQILIRDKTAIETDYIIDKFDQLKDKLIQLNTHNSLKHNNNNTKPSSQKYEERSSQDSGSFINSYYKTDQATPQNADYHYEDVNSPQTFVNFEDNIKLNGKISSDENLKKKENTKNEINDNYDNELDREISRHLTHKKNLFDDKIQIFKNKYNENILEDTDFIKLWKYDQNGEIIEALNQVPVPKIYLNIDAPKYCLWKILQNSGKNAYSEIPTPNRKLEAWRQQVNLKFFYKQNFDTSISLRNISKEELSNFKMKIVESTNQNEKHHSDQYTQINCQEHGKDNTQHDDKNNPNFRNYLNDKKTHKKNAESNILQTDKITYNVSTDEKRETQYDVKGNNPDTETNNEQSTVNKLKEKHKKAFYTLVVRDGIIDEILSDDISILKKLNQELKEKNESNEGKGNDLDATEQRENEQVGPNGEKKTTSKIFVGSFFNIKDPEVEYLINKELYFIPEHTNWYKKNTQPFVRGQIGKQSRKFDNDYPIYDYRKSDFGMAKFSALNLASIKDCAVLYLDKDIDLSDKFFHIIFISTSKNEDENLQNDQSYVVYENIPTDKQSPNLEKKQPSDEIYNEDEDHETSDNLLQNDQATNSNVEINHQDDKGNEPNSITNNIQKNNNYKKNEITNSIHNPITNPRLVLYIKENSKINIHESHISLNNNNGGMVNALSRIYLEQNSKVNHILSQELGKSAWYFHNVSVQNGINSNYKFVDILLGSLSSRVNLQIEGSQGSKQQSYGLSLLEGKQNISQYEMFHHEHSSMQTDQLFKSLVSDTAHSVWRSRGRIERNAIKAKLNTLCRSVLLNLGASAVAIPTLEIIPSDIEEANHGATISDLEEEPIFSLMSRGIDTNIARRIMMKAFVNEILEHVPDENLKNKVYQKIFKFSQKYKDESKKILRMTNL.

A compositionally biased stretch (low complexity) spans 477–487; sequence NSLKHNNNNTK. Disordered stretches follow at residues 477-498, 723-743, 765-794, 835-865, and 992-1055; these read NSLK…ERSS, HGKD…NYLN, NVST…QSTV, EKNE…GEKK, and NIPT…NNIQ. A compositionally biased stretch (basic and acidic residues) spans 723-734; that stretch reads HGKDNTQHDDKN. Over residues 782 to 794 the composition is skewed to polar residues; sequence NPDTETNNEQSTV. The segment covering 1022–1037 has biased composition (polar residues); that stretch reads DNLLQNDQATNSNVEI.

Belongs to the iron-sulfur cluster assembly SufBD family. As to quaternary structure, component of a complex composed of SufB, SufC and SufD in a stoichiometric ratio of 1:2:1. Interacts with SufB. Interacts with SufC; the interaction enhances the ATPase activity of SufC.

It is found in the plastid. The protein localises to the apicoplast. It participates in cofactor biosynthesis; iron-sulfur cluster biosynthesis. In terms of biological role, participates in the sulfur mobilization (SUF) pathway for iron-sulfur (Fe-S) cluster biogenesis. As part of a complex consisting of SufB-SufC(2)-SufD, involved in assembly of [4Fe-4S] clusters. Enhances the ATPase activity of SufC. The polypeptide is Iron-sulfur cluster assembly protein SufD (Plasmodium berghei (strain Anka)).